A 488-amino-acid chain; its full sequence is MTELSALVERVEKLRGTMVLCVGDAMLDRFVYGSVERISPEAPIPVLCIERETAMLGGAGNVVRNLVAVGAEPAFVSVVGDDTAGREVTRLVGEHGEIDPCIVVEPGRQTTIKTRFFASHQQLLRADRESRSPVGEAIRAQLLTRIERLLPKAGVMVLSDYGKGVLAEPIAIELIRRAKAAGKQVIVDPKGTDYTIYAGATVVTPNRKELHEATGQAVDSDEQVVAAARQLIDSCGFEAVLVTRSQDGMTLVRADGQIDHLPAEAREVFDVSGAGDTVVATLAAALASGATLPEAAHLANVAAGIVVGKVGTAVAYGDELVVALHREDLTLGEAKIVPVTAAAEVVDRWRRKGQKVGFTNGCFDLLHPGHVSILAQAKGACDKLVVGLNSDASVQRLKGPTRPVQSEASRATVLSSLATVDLVVIFGEDTPLEVIGTLKPDVLVKGADYTIDKVVGADLVQSWGGKVVLAELVNGQSTTNTIKKMNGN.

Positions 1 to 331 (MTELSALVER…VALHREDLTL (331 aa)) are ribokinase. ATP is bound at residue 206 to 209 (NRKE). Asp276 is an active-site residue. A cytidylyltransferase region spans residues 358 to 488 (FTNGCFDLLH…TNTIKKMNGN (131 aa)).

This sequence in the N-terminal section; belongs to the carbohydrate kinase PfkB family. It in the C-terminal section; belongs to the cytidylyltransferase family. Homodimer.

The enzyme catalyses D-glycero-beta-D-manno-heptose 7-phosphate + ATP = D-glycero-beta-D-manno-heptose 1,7-bisphosphate + ADP + H(+). The catalysed reaction is D-glycero-beta-D-manno-heptose 1-phosphate + ATP + H(+) = ADP-D-glycero-beta-D-manno-heptose + diphosphate. It participates in nucleotide-sugar biosynthesis; ADP-L-glycero-beta-D-manno-heptose biosynthesis; ADP-L-glycero-beta-D-manno-heptose from D-glycero-beta-D-manno-heptose 7-phosphate: step 1/4. The protein operates within nucleotide-sugar biosynthesis; ADP-L-glycero-beta-D-manno-heptose biosynthesis; ADP-L-glycero-beta-D-manno-heptose from D-glycero-beta-D-manno-heptose 7-phosphate: step 3/4. Catalyzes the phosphorylation of D-glycero-D-manno-heptose 7-phosphate at the C-1 position to selectively form D-glycero-beta-D-manno-heptose-1,7-bisphosphate. Functionally, catalyzes the ADP transfer from ATP to D-glycero-beta-D-manno-heptose 1-phosphate, yielding ADP-D-glycero-beta-D-manno-heptose. This is Bifunctional protein HldE from Paramagnetospirillum magneticum (strain ATCC 700264 / AMB-1) (Magnetospirillum magneticum).